The chain runs to 301 residues: Ribonuclease HIII (301 aa).

One can recognise an RNase H type-2 domain in the interval 90 to 301 (TPHIGIDESG…LDAILGKVGK (212 aa)). 3 residues coordinate a divalent metal cation: aspartate 96, glutamate 97, and aspartate 198.

This sequence belongs to the RNase HII family. RnhC subfamily. Requires Mn(2+) as cofactor. The cofactor is Mg(2+).

It localises to the cytoplasm. It carries out the reaction Endonucleolytic cleavage to 5'-phosphomonoester.. Functionally, endonuclease that specifically degrades the RNA of RNA-DNA hybrids. This Protochlamydia amoebophila (strain UWE25) protein is Ribonuclease HIII.